Reading from the N-terminus, the 369-residue chain is Peptidyl-prolyl cis-trans isomerase D (369 aa).

In terms of domain architecture, PPIase cyclophilin-type spans Tyr-7–Glu-175. TPR repeat units lie at residues Val-217–Tyr-250, Leu-268–Asp-301, and Thr-306–Asp-339.

The protein belongs to the cyclophilin-type PPIase family. PPIase D subfamily.

It localises to the cytoplasm. The enzyme catalyses [protein]-peptidylproline (omega=180) = [protein]-peptidylproline (omega=0). Its function is as follows. PPIases accelerate the folding of proteins. It catalyzes the cis-trans isomerization of proline imidic peptide bonds in oligopeptides. The protein is Peptidyl-prolyl cis-trans isomerase D (CPR6) of Candida albicans (strain SC5314 / ATCC MYA-2876) (Yeast).